The chain runs to 253 residues: Probable transcriptional regulatory protein Hore_12350 (253 aa).

Positions 1-21 are disordered; sequence MAGHSKWANIKHKKAKEDRKR.

The protein belongs to the TACO1 family.

The protein resides in the cytoplasm. The chain is Probable transcriptional regulatory protein Hore_12350 from Halothermothrix orenii (strain H 168 / OCM 544 / DSM 9562).